The chain runs to 329 residues: Glyceraldehyde-3-phosphate dehydrogenase 1 (329 aa).

Residues 11–12 (RI), D33, and K78 each bind NAD(+). Residues 148–150 (SCT), T179, 208–209 (TG), and R231 each bind D-glyceraldehyde 3-phosphate. C149 functions as the Nucleophile in the catalytic mechanism. An NAD(+)-binding site is contributed by N313.

This sequence belongs to the glyceraldehyde-3-phosphate dehydrogenase family. In terms of assembly, homotetramer.

The protein resides in the cytoplasm. The enzyme catalyses D-glyceraldehyde 3-phosphate + phosphate + NAD(+) = (2R)-3-phospho-glyceroyl phosphate + NADH + H(+). Its pathway is carbohydrate degradation; glycolysis; pyruvate from D-glyceraldehyde 3-phosphate: step 1/5. This Kluyveromyces lactis (strain ATCC 8585 / CBS 2359 / DSM 70799 / NBRC 1267 / NRRL Y-1140 / WM37) (Yeast) protein is Glyceraldehyde-3-phosphate dehydrogenase 1 (GAP1).